Consider the following 721-residue polypeptide: Exo beta-1,2-glucooligosaccharide sophorohydrolase (non-reducing end) (721 aa).

A signal peptide spans 1–18 (MKHIALLTTLLLSASLQA). Residues 474-708 (NHKLIGWNET…LLWNLFMSHP (235 aa)) form the Glycoamylase-like domain.

As to quaternary structure, monomer.

The protein localises to the periplasm. The enzyme catalyses [(1-&gt;2)-beta-D-glucosyl](n) + H2O = [(1-&gt;2)-beta-D-glucosyl](n-2) + sophorose. Functionally, catalyzes the hydrolysis of linear beta-1,2-glucan and beta-1,2-glucooligosaccharides with degrees of polymerization (DPs) greater than or equal to 4, to produce sophorose. The best substrates are tetra- and pentasaccharides. Acts as an exo-type enzyme that releases sophorose from the non-reducing end of the substrate. It cannot hydrolyze cyclic beta-1,2-glucans. This chain is Exo beta-1,2-glucooligosaccharide sophorohydrolase (non-reducing end), found in Parabacteroides distasonis (strain ATCC 8503 / DSM 20701 / CIP 104284 / JCM 5825 / NCTC 11152).